A 760-amino-acid chain; its full sequence is Transglutaminase-activating metalloprotease (760 aa).

An N-terminal signal peptide occupies residues 1–33; sequence MRPTPQRRAVATGALVAVTAMLAVGVQTTSANA. Disordered stretches follow at residues 32–59 and 228–265; these read NAGQDKAAHPAPRQSIHKPDPGAEPVKL and KQGTGNSQHSGQVQIGTTKSGSSYQMNDTTRGGHKTYN. Positions 34-229 are excised as a propeptide; the sequence is GQDKAAHPAP…KLFEFQGVKQ (196 aa). Residues 228–257 are compositionally biased toward polar residues; the sequence is KQGTGNSQHSGQVQIGTTKSGSSYQMNDTT. Residue His366 participates in Zn(2+) binding. The active site involves Glu367. Zn(2+) contacts are provided by His370 and Glu390. His454 functions as the Proton donor in the catalytic mechanism. The region spanning 640–760 is the P/Homo B domain; sequence TVNTTGGGSV…GTIDKWRLTF (121 aa).

This sequence belongs to the peptidase M4 family. Zn(2+) serves as cofactor.

It is found in the secreted. Its function is as follows. Cleaves the N-terminal propeptide of transglutaminase thus activating it. This chain is Transglutaminase-activating metalloprotease, found in Streptomyces mobaraensis (Streptoverticillium mobaraense).